The chain runs to 227 residues: Ion-translocating oxidoreductase complex subunit E (227 aa).

Transmembrane regions (helical) follow at residues 57-77 (LGLG…ISLF), 89-109 (IYVM…NAFA), 111-131 (PVYQ…IVIG), 146-166 (AFDG…LGAI), and 200-220 (GLLL…ILAV).

The protein belongs to the NqrDE/RnfAE family. The complex is composed of six subunits: RnfA, RnfB, RnfC, RnfD, RnfE and RnfG.

The protein localises to the cell inner membrane. Part of a membrane-bound complex that couples electron transfer with translocation of ions across the membrane. The polypeptide is Ion-translocating oxidoreductase complex subunit E (Haemophilus ducreyi (strain 35000HP / ATCC 700724)).